A 488-amino-acid polypeptide reads, in one-letter code: 3-octaprenyl-4-hydroxybenzoate carboxy-lyase (488 aa).

Residue Asn-172 coordinates Mn(2+). Residues 175-177, 189-191, and 194-195 contribute to the prenylated FMN site; these read IYR, RWL, and RG. Glu-238 is a binding site for Mn(2+). Asp-287 functions as the Proton donor in the catalytic mechanism.

It belongs to the UbiD family. As to quaternary structure, homohexamer. Requires prenylated FMN as cofactor. The cofactor is Mn(2+).

It localises to the cell membrane. The catalysed reaction is a 4-hydroxy-3-(all-trans-polyprenyl)benzoate + H(+) = a 2-(all-trans-polyprenyl)phenol + CO2. It participates in cofactor biosynthesis; ubiquinone biosynthesis. Catalyzes the decarboxylation of 3-octaprenyl-4-hydroxy benzoate to 2-octaprenylphenol, an intermediate step in ubiquinone biosynthesis. The polypeptide is 3-octaprenyl-4-hydroxybenzoate carboxy-lyase (Pseudomonas savastanoi pv. phaseolicola (strain 1448A / Race 6) (Pseudomonas syringae pv. phaseolicola (strain 1448A / Race 6))).